The primary structure comprises 255 residues: Chlorocatechol 1,2-dioxygenase (255 aa).

The Fe cation site is built by Tyr130, Tyr164, His188, and His190.

Belongs to the intradiol ring-cleavage dioxygenase family. It depends on Fe(3+) as a cofactor.

It catalyses the reaction 3,5-dichlorocatechol + O2 = (2E,4E)-2,4-dichloromuconate + 2 H(+). Its pathway is aromatic compound metabolism; 3-chlorocatechol degradation. Preferentially converts 3,5-dichlorocatechol as opposed to other chlorinated catechols. Retains diminished activity toward non-chlorinated substrates. The polypeptide is Chlorocatechol 1,2-dioxygenase (tfdC) (Burkholderia cepacia (Pseudomonas cepacia)).